Consider the following 463-residue polypeptide: 3-isopropylmalate dehydratase large subunit (463 aa).

Residues cysteine 347, cysteine 407, and cysteine 410 each contribute to the [4Fe-4S] cluster site.

The protein belongs to the aconitase/IPM isomerase family. LeuC type 1 subfamily. As to quaternary structure, heterodimer of LeuC and LeuD. [4Fe-4S] cluster serves as cofactor.

It catalyses the reaction (2R,3S)-3-isopropylmalate = (2S)-2-isopropylmalate. It participates in amino-acid biosynthesis; L-leucine biosynthesis; L-leucine from 3-methyl-2-oxobutanoate: step 2/4. In terms of biological role, catalyzes the isomerization between 2-isopropylmalate and 3-isopropylmalate, via the formation of 2-isopropylmaleate. The polypeptide is 3-isopropylmalate dehydratase large subunit (Buchnera aphidicola subsp. Cinara cedri (strain Cc)).